The primary structure comprises 353 residues: C-X-C chemokine receptor type 2 (353 aa).

At 1–45 (FNMESDSFEDLWKGEDFSNYSYSSDLPPSLPDVAPCRPESLEINK) the chain is on the extracellular side. N-linked (GlcNAc...) asparagine glycosylation is present at Asn-19. Residues 46–72 (YFVVIIYALVFLLSLLGNSLVMLVILY) traverse the membrane as a helical segment. The Cytoplasmic segment spans residues 73 to 81 (SRVGRSVTD). A helical transmembrane segment spans residues 82-102 (VYLLNLALADLLFALTLPIWA). Residues 103 to 117 (ASKVNGWIFGTFLCK) are Extracellular-facing. Cys-116 and Cys-193 form a disulfide bridge. A helical membrane pass occupies residues 118–139 (VVSLLKEVNFYSGILLLACISV). Topologically, residues 140 to 160 (DRYLAIVHATRTLTQKRYLVK) are cytoplasmic. Residues 161–180 (FICLSIWGLSLLLALPVLLF) traverse the membrane as a helical segment. The Extracellular segment spans residues 181–205 (RRTVYSSNVSPACYEDMGNNTANWR). A helical membrane pass occupies residues 206-228 (MLLRILPQSFGFIVPLLIMLFCY). Residues 229 to 248 (GFTLRTLFKAHMGQKHRAMR) lie on the Cytoplasmic side of the membrane. The helical transmembrane segment at 249-270 (VIFAVVLIFLLCWLPYSLVLLA) threads the bilayer. At 271 to 291 (DTLMRTQVIQETCERRNHIDR) the chain is on the extracellular side. A helical transmembrane segment spans residues 292–312 (ALDATEILGILHSCLNPLIYA). Over 313-353 (FIGQKFRHGLLKILAIHGLISKDSLPKDSRPSFVGSSSGHT) the chain is Cytoplasmic.

Belongs to the G-protein coupled receptor 1 family. In terms of assembly, interacts with IL8. Interacts with GNAI2. In terms of processing, phosphorylated upon ligand binding; which is required for desensitization.

It localises to the cell membrane. In terms of biological role, receptor for interleukin-8 which is a powerful neutrophil chemotactic factor. Binding of IL-8 to the receptor causes activation of neutrophils. This response is mediated via a G-protein that activates a phosphatidylinositol-calcium second messenger system. Binds to IL-8 with high affinity. Also binds with high affinity to CXCL3, GRO/MGSA and NAP-2. The chain is C-X-C chemokine receptor type 2 (CXCR2) from Macaca mulatta (Rhesus macaque).